A 257-amino-acid polypeptide reads, in one-letter code: tRNA pseudouridine synthase A (257 aa).

The active-site Nucleophile is the aspartate 53. Tyrosine 111 provides a ligand contact to substrate.

This sequence belongs to the tRNA pseudouridine synthase TruA family. In terms of assembly, homodimer.

The enzyme catalyses uridine(38/39/40) in tRNA = pseudouridine(38/39/40) in tRNA. Functionally, formation of pseudouridine at positions 38, 39 and 40 in the anticodon stem and loop of transfer RNAs. The chain is tRNA pseudouridine synthase A from Xanthomonas oryzae pv. oryzae (strain MAFF 311018).